The following is a 318-amino-acid chain: Acetyl-coenzyme A carboxylase carboxyl transferase subunit alpha (318 aa).

Residues 31–292 (DLIKEVSALE…KDAILRQLEL (262 aa)) form the CoA carboxyltransferase C-terminal domain.

It belongs to the AccA family. In terms of assembly, acetyl-CoA carboxylase is a heterohexamer composed of biotin carboxyl carrier protein (AccB), biotin carboxylase (AccC) and two subunits each of ACCase subunit alpha (AccA) and ACCase subunit beta (AccD).

It localises to the cytoplasm. The catalysed reaction is N(6)-carboxybiotinyl-L-lysyl-[protein] + acetyl-CoA = N(6)-biotinyl-L-lysyl-[protein] + malonyl-CoA. It participates in lipid metabolism; malonyl-CoA biosynthesis; malonyl-CoA from acetyl-CoA: step 1/1. In terms of biological role, component of the acetyl coenzyme A carboxylase (ACC) complex. First, biotin carboxylase catalyzes the carboxylation of biotin on its carrier protein (BCCP) and then the CO(2) group is transferred by the carboxyltransferase to acetyl-CoA to form malonyl-CoA. The polypeptide is Acetyl-coenzyme A carboxylase carboxyl transferase subunit alpha (Hydrogenovibrio crunogenus (strain DSM 25203 / XCL-2) (Thiomicrospira crunogena)).